A 300-amino-acid polypeptide reads, in one-letter code: Ribosomal RNA small subunit methyltransferase H (300 aa).

S-adenosyl-L-methionine-binding positions include alanine 33–histidine 35, aspartate 52, phenylalanine 86, aspartate 97, and glutamine 104.

The protein belongs to the methyltransferase superfamily. RsmH family.

The protein resides in the cytoplasm. The enzyme catalyses cytidine(1402) in 16S rRNA + S-adenosyl-L-methionine = N(4)-methylcytidine(1402) in 16S rRNA + S-adenosyl-L-homocysteine + H(+). Its function is as follows. Specifically methylates the N4 position of cytidine in position 1402 (C1402) of 16S rRNA. The sequence is that of Ribosomal RNA small subunit methyltransferase H from Aliarcobacter butzleri (strain RM4018) (Arcobacter butzleri).